Reading from the N-terminus, the 1559-residue chain is Bile pigment transporter 1 (1559 aa).

At 1 to 29 (MSSLEVVDGCPYGYRPYPDSGTNALNPCF) the chain is on the vacuolar side. A helical transmembrane segment spans residues 30–50 (ISVISAWQAVFFLLIGSYQLW). Topologically, residues 51-84 (KLYKNNKVPPRFKNFPTLPSKINSRHLTHLTNVC) are cytoplasmic. A helical transmembrane segment spans residues 85-105 (FQSTLIICELALVSQSSDRVY). The Vacuolar segment spans residues 106 to 110 (PFILK). A helical transmembrane segment spans residues 111-127 (KALYLNLLFNLGISLPT). The Cytoplasmic segment spans residues 128 to 139 (QYLAYFKSTFSM). Residues 140–160 (GNQLFYYMFQILLQLFLILQR) traverse the membrane as a helical segment. The Vacuolar portion of the chain corresponds to 161–178 (YYHGSSNERLTVISGQTA). A helical membrane pass occupies residues 179 to 199 (MILEVLLLFNSVAIFIYDLCI). Residues 200–283 (FEPINELSEY…WLNRNSLWRA (84 aa)) are Cytoplasmic-facing. The helical transmembrane segment at 284 to 304 (IWKSFGRTISVAMLYETTSDL) threads the bilayer. One can recognise an ABC transmembrane type-1 1 domain in the interval 292 to 578 (ISVAMLYETT…VPSMINTIIE (287 aa)). Residues 305-333 (LSVVQPQFLRIFIDGLNPETSSKYPPLNG) lie on the Vacuolar side of the membrane. Residues 334–354 (VFIALTLFVISVVSVFLTNQF) form a helical membrane-spanning segment. Residues 355–410 (YIGIFEAGLGIRGSLASLVYQKSLRLTLAERNEKSTGDILNLMSVDVLRIQRFFEN) are Cytoplasmic-facing. Residues 411–431 (AQTIIGAPIQIIVVLTSLYWL) traverse the membrane as a helical segment. Residues 432-434 (LGK) are Vacuolar-facing. A helical membrane pass occupies residues 435–455 (AVIGGLVTMAIMMPINAFLSR). The Cytoplasmic portion of the chain corresponds to 456 to 518 (KVKKLSKTQM…NFRKIGIVSN (63 aa)). The helical transmembrane segment at 519–539 (LIYFAWNCVPLMVTCSTFGLF) threads the bilayer. Over 540 to 560 (SLFSDSPLSPAIVFPSLSLFN) the chain is Vacuolar. A helical transmembrane segment spans residues 561–581 (ILNSAIYSVPSMINTIIETSV). Over 582 to 972 (SMERLKSFLL…VKTKIYLAYI (391 aa)) the chain is Cytoplasmic. In terms of domain architecture, ABC transporter 1 spans 639 to 871 (LRTDEESIIG…KNNTSKLKKL (233 aa)). Position 645 is a phosphoserine (Ser-645). Position 672–679 (672–679 (GRVGAGKS)) interacts with ATP. The tract at residues 877–899 (SPIDNGNESDVQTEHRSESEVDE) is disordered. Ser-885 is subject to Phosphoserine. At Thr-889 the chain carries Phosphothreonine. Ser-893 and Ser-895 each carry phosphoserine. Phosphothreonine is present on Thr-916. Phosphoserine is present on residues Ser-927 and Ser-931. Thr-934 carries the post-translational modification Phosphothreonine. The helical transmembrane segment at 973 to 993 (KACGVLGVVLFFLFMILTRVF) threads the bilayer. Residues 980–1265 (VVLFFLFMIL…IVRTTVTIET (286 aa)) enclose the ABC transmembrane type-1 2 domain. Residues 994-1030 (DLAENFWLKYWSESNEKNGSNERVWMFVGVYSLIGVA) are Vacuolar-facing. A glycan (N-linked (GlcNAc...) asparagine) is linked at Asn-1011. Residues 1031-1052 (SAAFNNLRSIMMLLYCSIRGSK) traverse the membrane as a helical segment. Residues 1053-1095 (KLHESMAKSVIRSPMTFFETTPVGRIINRFSSDMDAVDSNLQY) lie on the Cytoplasmic side of the membrane. The helical transmembrane segment at 1096 to 1116 (IFSFFFKSILTYLVTVILVGY) threads the bilayer. A topological domain (vacuolar) is located at residue Asn-1117. A helical transmembrane segment spans residues 1118-1138 (MPWFLVFNMFLVVIYIYYQTF). Residues 1139–1209 (YIVLSRELKR…STNRWLSVRL (71 aa)) lie on the Cytoplasmic side of the membrane. The chain crosses the membrane as a helical span at residues 1210–1230 (QTIGATIVLATAILALATMNT). The Vacuolar portion of the chain corresponds to 1231–1235 (KRQLS). Residues 1236-1256 (SGMVGLLMSYSLEVTGSLTWI) traverse the membrane as a helical segment. Residues 1257 to 1559 (VRTTVTIETN…SLCEKGGYLK (303 aa)) are Cytoplasmic-facing. The ABC transporter 2 domain maps to 1302–1553 (IEFKNYSTKY…KTSIFYSLCE (252 aa)). Residue 1336-1343 (GRTGAGKS) coordinates ATP. Residues 1420–1433 (HLEKMLHSKPRGDD) are compositionally biased toward basic and acidic residues. The tract at residues 1420–1439 (HLEKMLHSKPRGDDSNEEDG) is disordered.

This sequence belongs to the ABC transporter superfamily.

Its subcellular location is the vacuole membrane. Cooperates for the ATP-dependent vacuolar transport of bilirubin and glutathione conjugates. This is Bile pigment transporter 1 (BPT1) from Saccharomyces cerevisiae (strain ATCC 204508 / S288c) (Baker's yeast).